The chain runs to 112 residues: MRHYEIMFLVHPDQSEQVPGMVERYEGIITKHNGKIHRKEDLGRRQLAYSINKVHKAHYILMNVECNLDALNEIKNAFKFNDAILRHLITVQKQAITTESVLMKKEKETKVA.

Belongs to the bacterial ribosomal protein bS6 family.

Its function is as follows. Binds together with bS18 to 16S ribosomal RNA. The polypeptide is Small ribosomal subunit protein bS6 (Legionella pneumophila (strain Paris)).